The primary structure comprises 433 residues: Histone deacetylase RPD3 (433 aa).

Positions 19–331 are histone deacetylase; that stretch reads RRVAYFYDAD…WCFETGLLNN (313 aa). His151 is a catalytic residue. The ESA1-RPD3 motif motif lies at 320-340; that stretch reads RTWCFETGLLNNVVLDKDLPY. The disordered stretch occupies residues 388-433; it reads SVQLNHTPRDAEDLGDVEEDSAEAKDTKGGSQYARDLHVEHDNEFY. Thr394 carries the post-translational modification Phosphothreonine. Ser408 is subject to Phosphoserine. A compositionally biased stretch (basic and acidic residues) spans 422–433; the sequence is RDLHVEHDNEFY.

The protein belongs to the histone deacetylase family. HD type 1 subfamily. Component of the RPD3C(L) complex composed of at least ASH1, CTI6, DEP1, PHO23, RPD3, RXT2, RXT3, SAP30, SDS3, SIN3, UME1 and UME6. Component of the RPD3C(S) complex composed of at least EAF3, RCO1, RPD3, SIN3, and UME1. Interacts with cyclophilins CPR1, CPR6 and CPR7, with the kinase HOG1, and with ESS1, CYC8 and HAC1.

The protein localises to the cytoplasm. It is found in the nucleus. The catalysed reaction is N(6)-acetyl-L-lysyl-[histone] + H2O = L-lysyl-[histone] + acetate. Functionally, catalytic component of the RPD3 histone deacetylase (HDAC) complexes RPD3C(L) and RPD3C(S) responsible for the deacetylation of lysine residues on the N-terminal part of the core histones (H2A, H2B, H3 and H4). Histone deacetylation plays an important role in transcriptional regulation, cell cycle progression, DNA damage response, osmotic stress response and developmental events. Is involved in rDNA and telomere silencing and in double strand breaks repair. Required for both full transcription repression and activation of many genes including cell type-specific genes (STE6, TY2 and HO), cell differentiation-specific genes (SPO13), genes that respond to external signals (PHO5) and TRK2. The RPD3 complexes regulate also chromosomal replication timing. The sequence is that of Histone deacetylase RPD3 (RPD3) from Saccharomyces cerevisiae (strain ATCC 204508 / S288c) (Baker's yeast).